The sequence spans 165 residues: Phosphopantetheine adenylyltransferase (165 aa).

Substrate is bound at residue S10. ATP is bound by residues S10–F11 and H18. 3 residues coordinate substrate: K42, T79, and R93. Residues G94–R96, E104, and V129–T135 contribute to the ATP site.

This sequence belongs to the bacterial CoaD family. As to quaternary structure, homohexamer. Mg(2+) serves as cofactor.

Its subcellular location is the cytoplasm. The catalysed reaction is (R)-4'-phosphopantetheine + ATP + H(+) = 3'-dephospho-CoA + diphosphate. It functions in the pathway cofactor biosynthesis; coenzyme A biosynthesis; CoA from (R)-pantothenate: step 4/5. Its function is as follows. Reversibly transfers an adenylyl group from ATP to 4'-phosphopantetheine, yielding dephospho-CoA (dPCoA) and pyrophosphate. In Afipia carboxidovorans (strain ATCC 49405 / DSM 1227 / KCTC 32145 / OM5) (Oligotropha carboxidovorans), this protein is Phosphopantetheine adenylyltransferase.